Reading from the N-terminus, the 143-residue chain is Transcriptional regulator MraZ (143 aa).

2 SpoVT-AbrB domains span residues 5 to 47 (EYRH…PQSE) and 76 to 119 (ASEC…SKTL).

Belongs to the MraZ family. Forms oligomers.

Its subcellular location is the cytoplasm. The protein localises to the nucleoid. The protein is Transcriptional regulator MraZ of Shouchella clausii (strain KSM-K16) (Alkalihalobacillus clausii).